Here is a 105-residue protein sequence, read N- to C-terminus: Nucleoid-associated protein SE_2306 (105 aa).

Residues 1 to 40 are disordered; that stretch reads MRGGGNMQQMMKQMQKMQKKMAQEQEKLKEERVAGTAGGG. The span at 7–16 shows a compositional bias: low complexity; that stretch reads MQQMMKQMQK. Over residues 21–33 the composition is skewed to basic and acidic residues; it reads MAQEQEKLKEERV.

This sequence belongs to the YbaB/EbfC family. Homodimer.

The protein resides in the cytoplasm. Its subcellular location is the nucleoid. Functionally, binds to DNA and alters its conformation. May be involved in regulation of gene expression, nucleoid organization and DNA protection. In Staphylococcus epidermidis (strain ATCC 12228 / FDA PCI 1200), this protein is Nucleoid-associated protein SE_2306.